The sequence spans 304 residues: tRNA pseudouridine synthase B (304 aa).

Asp44 (nucleophile) is an active-site residue.

The protein belongs to the pseudouridine synthase TruB family. Type 1 subfamily.

It catalyses the reaction uridine(55) in tRNA = pseudouridine(55) in tRNA. Its function is as follows. Responsible for synthesis of pseudouridine from uracil-55 in the psi GC loop of transfer RNAs. This is tRNA pseudouridine synthase B from Novosphingobium aromaticivorans (strain ATCC 700278 / DSM 12444 / CCUG 56034 / CIP 105152 / NBRC 16084 / F199).